We begin with the raw amino-acid sequence, 51 residues long: Insulin (51 aa).

Disulfide bonds link cysteine 7-cysteine 37, cysteine 19-cysteine 50, and cysteine 36-cysteine 41.

The protein belongs to the insulin family. As to quaternary structure, heterodimer of a B chain and an A chain linked by two disulfide bonds.

The protein localises to the secreted. Its function is as follows. Insulin decreases blood glucose concentration. It increases cell permeability to monosaccharides, amino acids and fatty acids. It accelerates glycolysis, the pentose phosphate cycle, and glycogen synthesis in liver. The polypeptide is Insulin (INS) (Ptyas dhumnades (Big-eyed ratsnake)).